Consider the following 332-residue polypeptide: Fructose-1,6-bisphosphatase class 1 (332 aa).

Mg(2+) is bound by residues glutamate 89, aspartate 110, leucine 112, and aspartate 113. Residues 113–116 (DGSS), asparagine 206, tyrosine 239, 257–259 (YLY), and lysine 269 each bind substrate. Residue glutamate 275 coordinates Mg(2+).

This sequence belongs to the FBPase class 1 family. As to quaternary structure, homotetramer. Mg(2+) serves as cofactor.

The protein localises to the cytoplasm. It carries out the reaction beta-D-fructose 1,6-bisphosphate + H2O = beta-D-fructose 6-phosphate + phosphate. The protein operates within carbohydrate biosynthesis; gluconeogenesis. The polypeptide is Fructose-1,6-bisphosphatase class 1 (Erwinia tasmaniensis (strain DSM 17950 / CFBP 7177 / CIP 109463 / NCPPB 4357 / Et1/99)).